A 130-amino-acid polypeptide reads, in one-letter code: Protein ApaG (130 aa).

Residues serine 3–arginine 127 enclose the ApaG domain.

The protein is Protein ApaG of Brucella abortus (strain S19).